A 332-amino-acid polypeptide reads, in one-letter code: Cytochrome c oxidase subunit 2 (332 aa).

The N-terminal stretch at 1–20 is a signal peptide; that stretch reads MKIPGSVITLLIGVVITVVS. The next 2 membrane-spanning stretches (helical) occupy residues 48 to 68 and 87 to 107; these read MMTI…YCLI and VPLE…LAVY. Histidine 214, cysteine 249, cysteine 253, and histidine 257 together coordinate Cu cation.

The protein belongs to the cytochrome c oxidase subunit 2 family. Cu cation is required as a cofactor.

The protein resides in the cell membrane. It carries out the reaction 4 Fe(II)-[cytochrome c] + O2 + 8 H(+)(in) = 4 Fe(III)-[cytochrome c] + 2 H2O + 4 H(+)(out). In terms of biological role, subunits I and II form the functional core of the enzyme complex. Electrons originating in cytochrome c are transferred via heme a and Cu(A) to the binuclear center formed by heme a3 and Cu(B). The chain is Cytochrome c oxidase subunit 2 (ctaC) from Synechocystis sp. (strain ATCC 27184 / PCC 6803 / Kazusa).